A 389-amino-acid polypeptide reads, in one-letter code: tRNA-specific 2-thiouridylase MnmA (389 aa).

ATP contacts are provided by residues 9–16 and Met35; that span reads GMSGGVDS. Residues 95–97 form an interaction with target base in tRNA region; sequence NPD. Residue Cys100 is the Nucleophile of the active site. Cys100 and Cys196 are oxidised to a cystine. Gly124 serves as a coordination point for ATP. Positions 146 to 148 are interaction with tRNA; it reads KDQ. Catalysis depends on Cys196, which acts as the Cysteine persulfide intermediate. Residues 308-309 form an interaction with tRNA region; it reads RY.

Belongs to the MnmA/TRMU family.

It is found in the cytoplasm. It catalyses the reaction S-sulfanyl-L-cysteinyl-[protein] + uridine(34) in tRNA + AH2 + ATP = 2-thiouridine(34) in tRNA + L-cysteinyl-[protein] + A + AMP + diphosphate + H(+). Catalyzes the 2-thiolation of uridine at the wobble position (U34) of tRNA, leading to the formation of s(2)U34. The sequence is that of tRNA-specific 2-thiouridylase MnmA from Burkholderia ambifaria (strain MC40-6).